We begin with the raw amino-acid sequence, 640 residues long: Probable potassium transport system protein Kup 2 (640 aa).

The next 12 helical transmembrane spans lie at 19 to 39, 67 to 87, 118 to 138, 155 to 175, 181 to 201, 230 to 250, 265 to 285, 307 to 327, 355 to 375, 384 to 404, 415 to 435, and 437 to 457; these read LFSS…YGDI, VLSL…VVFV, GVVA…GVIT, EAAK…LFLV, GVIG…IAAL, FVGV…EALY, WLGL…ALLL, MVCL…SGVF, VYIP…VLVF, AYGI…FFVI, AVPL…ANLF, and IFDG…SMIT.

Belongs to the HAK/KUP transporter (TC 2.A.72) family.

It is found in the cell inner membrane. It carries out the reaction K(+)(in) + H(+)(in) = K(+)(out) + H(+)(out). Transport of potassium into the cell. Likely operates as a K(+):H(+) symporter. The chain is Probable potassium transport system protein Kup 2 from Syntrophobacter fumaroxidans (strain DSM 10017 / MPOB).